We begin with the raw amino-acid sequence, 581 residues long: DNA primase (581 aa).

The CHC2-type zinc finger occupies 40-64 (CPFHNEKTPSFTVNGEKQFYHCFGC). Positions 259–341 (NRLLVVEGYM…GRQLRFMFLP (83 aa)) constitute a Toprim domain. Residues glutamate 265, aspartate 309, and aspartate 311 each coordinate Mg(2+).

The protein belongs to the DnaG primase family. Monomer. Interacts with DnaB. The cofactor is Zn(2+). Mg(2+) is required as a cofactor.

It carries out the reaction ssDNA + n NTP = ssDNA/pppN(pN)n-1 hybrid + (n-1) diphosphate.. Functionally, RNA polymerase that catalyzes the synthesis of short RNA molecules used as primers for DNA polymerase during DNA replication. This Escherichia coli O6:H1 (strain CFT073 / ATCC 700928 / UPEC) protein is DNA primase.